We begin with the raw amino-acid sequence, 145 residues long: Peptide methionine sulfoxide reductase MsrB (145 aa).

The 124-residue stretch at S4–Y127 folds into the MsrB domain. The active-site Nucleophile is C116.

Belongs to the MsrB Met sulfoxide reductase family.

The enzyme catalyses L-methionyl-[protein] + [thioredoxin]-disulfide + H2O = L-methionyl-(R)-S-oxide-[protein] + [thioredoxin]-dithiol. The protein is Peptide methionine sulfoxide reductase MsrB of Streptococcus pyogenes serotype M1.